Here is a 397-residue protein sequence, read N- to C-terminus: Iripin-2 (397 aa).

The N-terminal stretch at 1–21 (MEDFKMKTLAAFLSLLVLCWA) is a signal peptide. Asn109 and Asn270 each carry an N-linked (GlcNAc...) asparagine glycan.

Belongs to the serpin family. As to quaternary structure, interacts with mouse MCPT4. In terms of tissue distribution, female salivary gland. Ovary. Midgut.

Its subcellular location is the secreted. Serine protease inhibitor that modulates blood feeding of ticks on vertebrate species. Inhibits host trypsin, thrombin (F2), alpha-chymotrypsin, cathepsin G (CTSG) and mast cell chymase (CMA1). Inhibits host cathepsin G- and thrombin-induced platelet aggregation. Inhibits acute inflammation in the host. Suppresses neutrophil recruitment in inflamed area. Does not inhibit host plasmin (PLG), factor Xa (F10), factor XIa (F11), elastase and proteinase 3/myeloblastin (PRTN3). In terms of biological role, (Microbial infection) Inhibits IL6 production by mouse splenic dendritic cells in response to Borrelia burgdorferi exposure. Decreases levels of STAT3 phosphorylation in mouse splenic dendritic cells in response to Borrelia burgdorferi exposure and in Borrelia-primed CD4+ T-lymphocytes. Inhibits differentiation of mouse Th17 cells, a subset of CD4+ T-lymphocytes that play a crucial role in protection against extracellular bacteria, in response to Borrelia burgdorferi exposure via inhibition of the IL6/STAT3 signaling pathway. The chain is Iripin-2 from Ixodes ricinus (Common tick).